The sequence spans 153 residues: uncharacterized protein (153 aa).

The signal sequence occupies residues 1 to 19 (MRKYIPLVLFIFSWPVLCA). Catalysis depends on residues R46, E54, and R88.

Belongs to the thermonuclease family.

This is an uncharacterized protein from Escherichia coli.